The primary structure comprises 197 residues: Carnitine operon protein CaiE (197 aa).

The tract at residues 177–197 is disordered; the sequence is TAPEANRPRLRGTTEVKPKGQ. Over residues 188-197 the composition is skewed to basic and acidic residues; it reads GTTEVKPKGQ.

This sequence belongs to the transferase hexapeptide repeat family.

It participates in amine and polyamine metabolism; carnitine metabolism. Its function is as follows. Overproduction of CaiE stimulates the activity of CaiB and CaiD. The polypeptide is Carnitine operon protein CaiE (Proteus sp. (strain LE138)).